Consider the following 647-residue polypeptide: Pumilio homolog 3 (647 aa).

Basic residues predominate over residues 1–10 (MEVKGKKKFT). Positions 1-123 (MEVKGKKKFT…KKKKELKQSR (123 aa)) are disordered. Lysine 33 bears the N6-acetyllysine mark. Residues 59–68 (PGKKGVKQFK) show a composition bias toward basic residues. Residues 102–123 (SGAKKPKWDDFKKKKKELKQSR) show a composition bias toward basic and acidic residues. The short motif at 105-117 (KKPKWDDFKKKKK) is the Nuclear localization signal element. Residues 142–509 (ESLRRKDCDK…VVLDKSACVL (368 aa)) form the PUM-HD domain. 11 Pumilio repeats span residues 176–211 (HDST…LSKA), 212–247 (KYSR…MLRH), 248–276 (SEAS…ELYG), 288–324 (PTLD…VIKH), 325–360 (SLVH…LAHT), 361–396 (HDGA…VANG), 397–434 (QYSH…IVND), 435–503 (KYGR…VVLD), 504–550 (KSAC…VAEH), 551–595 (PAGH…WASI), and 596–635 (NRGA…KSSS).

In terms of assembly, interacts with PARP1 (via catalytic domain). In the adult eye, expressed primarily in retinal ganglion cells and, to a lesser extent, in the pigmented cells.

It is found in the nucleus. Its subcellular location is the nucleolus. It localises to the nucleoplasm. The protein localises to the chromosome. Its function is as follows. Inhibits the poly(ADP-ribosyl)ation activity of PARP1 and the degradation of PARP1 by CASP3 following genotoxic stress. Binds to double-stranded RNA or DNA without sequence specificity. Involved in development of the eye and of primordial germ cells. The chain is Pumilio homolog 3 from Mus musculus (Mouse).